Reading from the N-terminus, the 275-residue chain is Probable endonuclease lcl3 (275 aa).

Residues 1–25 (MRWPPWASNTQASNNDHPTTTNNND) form a disordered region. Residues 14–25 (NNDHPTTTNNND) are compositionally biased toward low complexity. Residues 41–57 (LIPTLVLTTGILSAFTL) traverse the membrane as a helical segment. Residues 79–247 (RSILGKVTSV…KARGLGLWKG (169 aa)) enclose the TNase-like domain. Residue arginine 130 is part of the active site. Aspartate 135 is a Ca(2+) binding site. Active-site residues include glutamate 138 and arginine 178.

The protein belongs to the LCL3 family.

The protein resides in the mitochondrion. The protein localises to the membrane. This is Probable endonuclease lcl3 (lcl3) from Aspergillus niger (strain ATCC MYA-4892 / CBS 513.88 / FGSC A1513).